A 107-amino-acid chain; its full sequence is MIVNGIGALNLKPGLGDTATDLIQGGVAPATSGNLGTSFAEAVSQAASKTVNTLQNAEQVSLQALKGDADTRQVVDAVMSAQQALQTAVAIRDKVVSAYLEVSRMGI.

Belongs to the FliE family.

It localises to the bacterial flagellum basal body. The sequence is that of Flagellar hook-basal body complex protein FliE from Mesorhizobium japonicum (strain LMG 29417 / CECT 9101 / MAFF 303099) (Mesorhizobium loti (strain MAFF 303099)).